A 691-amino-acid polypeptide reads, in one-letter code: Gex-3-interacting protein 13 (691 aa).

Disordered stretches follow at residues 18–97 and 171–195; these read TASL…SAHL and PASP…KRQR. Positions 31-46 are enriched in low complexity; sequence SSFTTTSESTSPPYSS. The span at 47-57 shows a compositional bias: basic and acidic residues; it reads SEHHSPTDQRT. Residues 58–79 show a composition bias toward polar residues; that stretch reads ETPTSDSGNASFSPENVATSFE. The segment covering 171-183 has biased composition (low complexity); it reads PASPCTTAASAPS. 2 consecutive BED-type zinc fingers follow at residues 194-242 and 424-473; these read QRRN…YEKV and LRRH…YEKV. Residues cysteine 212, cysteine 215, histidine 230, histidine 235, cysteine 443, cysteine 446, histidine 461, and histidine 466 each contribute to the Zn(2+) site.

Interacts with gex-3.

The chain is Gex-3-interacting protein 13 (gei-13) from Caenorhabditis elegans.